The chain runs to 317 residues: MKIKLIDSVVRSFKVAKIFRENTDKINAIDFAPNGEHLISCSEDDQIVIYDCEKGTQSRTVNSKKYGVDLIHFTHANNTAIHSSTKVDDTIRYLSLHDNKYLRYFPGHTKKVISLCISPVEDTFLSGSLDKTLRLWDLRSPNCQGLMHLSGRPIAAYDPEGLIFAAGVNSESIKLYDLRSFDKGPFVTFKLNQEKECDWTGLKFSRDGKTILISTNGSVIRLVDAFHGTPLQTFTGYPNNKGIPIEASFSPDSQFIFSGSTDGRVHIWNADTGNKVSVLNGDHPGPVQCVQFNPKYMMLASACTNMAFWLPTSEEGL.

WD repeat units follow at residues 21–60 (ENTDKINAIDFAPNGEHLISCSEDDQIVIYDCEKGTQSRT), 107–146 (GHTKKVISLCISPVEDTFLSGSLDKTLRLWDLRSPNCQGL), 148–186 (HLSGRPIAAYDPEGLIFAAGVNSESIKLYDLRSFDKGPF), 194–233 (EKECDWTGLKFSRDGKTILISTNGSVIRLVDAFHGTPLQT), 238–278 (PNNK…KVSV), and 282–317 (DHPGPVQCVQFNPKYMMLASACTNMAFWLPTSEEGL).

It belongs to the WD repeat SWD2 family. In terms of assembly, component of the SET1 complex, composed at least of the catalytic subunit Set1, wds/WDR5, Wdr82, Rbbp5, ash2, Cfp1/CXXC1, hcf and Dpy-30L1. Interacts with male-specific lethal (MSL) histone acetyltransferase complex at least composed of mof, msl-1, msl-2 and msl-3. Interacts with su(sable).

The protein resides in the nucleus. Its function is as follows. Component of the SET1 complex that specifically di- and trimethylates 'Lys-4' of histone H3. Together with su(sable), part of a transcription termination checkpoint that promotes transcription termination of aberrant RNAs and their subsequent degradation by the nuclear exosome. The polypeptide is WD repeat-containing protein 82 (Drosophila melanogaster (Fruit fly)).